We begin with the raw amino-acid sequence, 247 residues long: Flavin-dependent thymidylate synthase (247 aa).

Residues 1 to 237 (MDVKLLEATD…PKTFEYYEQE (237 aa)) enclose the ThyX domain. Residues 85–88 (QITR), 98–100 (SMR), and arginine 176 each bind dUMP. An FAD-binding site is contributed by 88–90 (RHR). The short motif at 88–98 (RHRHVSFDVQS) is the ThyX motif element. FAD contacts are provided by residues 192 to 194 (NAR) and histidine 198. Residue arginine 203 coordinates dUMP. The active-site Involved in ionization of N3 of dUMP, leading to its activation is the arginine 203.

This sequence belongs to the thymidylate synthase ThyX family. In terms of assembly, homotetramer. FAD is required as a cofactor.

It carries out the reaction dUMP + (6R)-5,10-methylene-5,6,7,8-tetrahydrofolate + NADPH + H(+) = dTMP + (6S)-5,6,7,8-tetrahydrofolate + NADP(+). Its pathway is pyrimidine metabolism; dTTP biosynthesis. In terms of biological role, catalyzes the reductive methylation of 2'-deoxyuridine-5'-monophosphate (dUMP) to 2'-deoxythymidine-5'-monophosphate (dTMP) while utilizing 5,10-methylenetetrahydrofolate (mTHF) as the methyl donor, and NADPH and FADH(2) as the reductant. This chain is Flavin-dependent thymidylate synthase, found in Haloarcula marismortui (strain ATCC 43049 / DSM 3752 / JCM 8966 / VKM B-1809) (Halobacterium marismortui).